The following is a 469-amino-acid chain: Cyclin-dependent kinase 14 (469 aa).

Phosphoserine is present on residues S24, S78, and S95. The interval 103–133 (FKTSSTGKESPKVRRHSSPSSPTSPKFGKAD) is disordered. Phosphoserine is present on S134. In terms of domain architecture, Protein kinase spans 135–419 (YEKLEKLGEG…AQAALSHEYF (285 aa)). Residues 141-149 (LGEGSYATV) and K164 each bind ATP. D256 serves as the catalytic Proton acceptor. The segment at 449 to 469 (ESMRAFGKNNSYGKSLSNSKH) is disordered. Residues 456 to 469 (KNNSYGKSLSNSKH) are compositionally biased toward polar residues.

The protein belongs to the protein kinase superfamily. CMGC Ser/Thr protein kinase family. CDC2/CDKX subfamily. In terms of assembly, found in a complex with LRP6, CCNY and CAPRIN2 during G2/M stage; CAPRIN2 functions as a scaffold for the complex by binding to CCNY via its N terminus and to CDK14 via its C terminus. Interacts with CCNY; CCNY mediates its recruitment to the plasma membrane and promotes phosphorylation of LRP6. Interacts with CCDN3 and CDKN1A. Interacts with SEPT8. Interacts with 14-3-3 proteina YWHAB, YWHAE, YWHAH and YWHAQ. Highly expressed in brain, pancreas, kidney, heart, testis and ovary. Also detected at lower levels in other tissues except in spleen and thymus where expression is barely detected.

Its subcellular location is the cell membrane. The protein localises to the cytoplasm. The protein resides in the nucleus. The enzyme catalyses L-seryl-[protein] + ATP = O-phospho-L-seryl-[protein] + ADP + H(+). The catalysed reaction is L-threonyl-[protein] + ATP = O-phospho-L-threonyl-[protein] + ADP + H(+). With respect to regulation, serine/threonine-protein kinase activity is promoted by associated cyclins CCDN3 and CCNY and repressed by CDKN1A. In terms of biological role, serine/threonine-protein kinase involved in the control of the eukaryotic cell cycle, whose activity is controlled by an associated cyclin. Acts as a cell-cycle regulator of Wnt signaling pathway during G2/M phase by mediating the phosphorylation of LRP6 at 'Ser-1490', leading to the activation of the Wnt signaling pathway. Acts as a regulator of cell cycle progression and cell proliferation via its interaction with CCDN3. Phosphorylates RB1 in vitro, however the relevance of such result remains to be confirmed in vivo. May also play a role in meiosis, neuron differentiation and may indirectly act as a negative regulator of insulin-responsive glucose transport. The protein is Cyclin-dependent kinase 14 (CDK14) of Homo sapiens (Human).